Reading from the N-terminus, the 339-residue chain is 4-hydroxy-2-oxovalerate aldolase 3 (339 aa).

The Pyruvate carboxyltransferase domain occupies 7–259; it reads IRVTDTSLRD…KTGIDFFAIA (253 aa). 15 to 16 serves as a coordination point for substrate; it reads RD. Aspartate 16 lines the Mn(2+) pocket. Histidine 19 acts as the Proton acceptor in catalysis. The substrate site is built by serine 169 and histidine 198. Histidine 198 and histidine 200 together coordinate Mn(2+). Residue tyrosine 289 participates in substrate binding.

This sequence belongs to the 4-hydroxy-2-oxovalerate aldolase family.

It carries out the reaction (S)-4-hydroxy-2-oxopentanoate = acetaldehyde + pyruvate. This chain is 4-hydroxy-2-oxovalerate aldolase 3 (hsaF), found in Rhodococcus jostii (strain RHA1).